Here is a 285-residue protein sequence, read N- to C-terminus: Ribosomal protein L11 methyltransferase (285 aa).

S-adenosyl-L-methionine is bound by residues Thr131, Gly154, Asp176, and Asn223.

It belongs to the methyltransferase superfamily. PrmA family.

It localises to the cytoplasm. The enzyme catalyses L-lysyl-[protein] + 3 S-adenosyl-L-methionine = N(6),N(6),N(6)-trimethyl-L-lysyl-[protein] + 3 S-adenosyl-L-homocysteine + 3 H(+). Its function is as follows. Methylates ribosomal protein L11. This Brucella suis (strain ATCC 23445 / NCTC 10510) protein is Ribosomal protein L11 methyltransferase.